The following is a 374-amino-acid chain: N-acetyldiaminopimelate deacetylase (374 aa).

The active site involves D69. E128 acts as the Proton acceptor in catalysis.

This sequence belongs to the peptidase M20A family. N-acetyldiaminopimelate deacetylase subfamily.

The catalysed reaction is N-acetyl-(2S,6S)-2,6-diaminopimelate + H2O = (2S,6S)-2,6-diaminopimelate + acetate. It participates in amino-acid biosynthesis; L-lysine biosynthesis via DAP pathway; LL-2,6-diaminopimelate from (S)-tetrahydrodipicolinate (acetylase route): step 3/3. Catalyzes the conversion of N-acetyl-diaminopimelate to diaminopimelate and acetate. The protein is N-acetyldiaminopimelate deacetylase of Bacillus velezensis (strain DSM 23117 / BGSC 10A6 / LMG 26770 / FZB42) (Bacillus amyloliquefaciens subsp. plantarum).